A 189-amino-acid chain; its full sequence is Casparian strip membrane protein 1 (189 aa).

Topologically, residues 1–25 are cytoplasmic; that stretch reads MMQAESGSAEAKGPLPPPVGRKRRG. The chain crosses the membrane as a helical span at residues 26–46; it reads LGILDFLLRLLAIGATLSAAI. The Extracellular portion of the chain corresponds to 47 to 73; the sequence is TMGTTNETLQFFTQFFQFKARFYDLSA. Asn52 is a glycosylation site (N-linked (GlcNAc...) asparagine). Residues 74–94 traverse the membrane as a helical segment; the sequence is FIYFVIANAIVGGYLLLSLPI. At 95–108 the chain is on the cytoplasmic side; that stretch reads SILNIVRPRAASSR. The helical transmembrane segment at 109 to 129 threads the bilayer; sequence VFLIFFDTVMVAVCTSGAAAA. The Extracellular segment spans residues 130 to 158; that stretch reads VAILYVARKGNSRTNWFAICQRFNSFCNQ. Residues 159 to 179 traverse the membrane as a helical segment; it reads AIGAVSASFAGVVFLILLVLL. Over 180-189 the chain is Cytoplasmic; it reads SASTLYRRRP.

Belongs to the Casparian strip membrane proteins (CASP) family. In terms of assembly, homodimer and heterodimers.

Its subcellular location is the cell membrane. In terms of biological role, regulates membrane-cell wall junctions and localized cell wall deposition. Required for establishment of the Casparian strip membrane domain (CSD) and the subsequent formation of Casparian strips, a cell wall modification of the root endodermis that determines an apoplastic barrier between the intraorganismal apoplasm and the extraorganismal apoplasm and prevents lateral diffusion. This is Casparian strip membrane protein 1 from Picea glauca (White spruce).